The primary structure comprises 113 residues: UPF0482 protein KPN78578_15540 (113 aa).

Positions 1–28 (MNMTLNKRWCLTAILALSAVVYTSSSYA) are cleaved as a signal peptide. A disordered region spans residues 38–60 (GDSAQSRQQASMEKEQWNDTRSL). Over residues 39 to 48 (DSAQSRQQAS) the composition is skewed to polar residues. Over residues 49–59 (MEKEQWNDTRS) the composition is skewed to basic and acidic residues.

The protein belongs to the UPF0482 family.

This chain is UPF0482 protein KPN78578_15540, found in Klebsiella pneumoniae subsp. pneumoniae (strain ATCC 700721 / MGH 78578).